Consider the following 273-residue polypeptide: Glutamate 5-kinase (273 aa).

Lys-15 serves as a coordination point for ATP. Residues Ser-55, Asp-142, and Asn-158 each coordinate substrate. ATP is bound by residues 178–179 (SD) and 220–226 (TGGMLSK).

This sequence belongs to the glutamate 5-kinase family.

Its subcellular location is the cytoplasm. It catalyses the reaction L-glutamate + ATP = L-glutamyl 5-phosphate + ADP. The protein operates within amino-acid biosynthesis; L-proline biosynthesis; L-glutamate 5-semialdehyde from L-glutamate: step 1/2. Functionally, catalyzes the transfer of a phosphate group to glutamate to form L-glutamate 5-phosphate. The protein is Glutamate 5-kinase of Streptococcus pyogenes serotype M4 (strain MGAS10750).